Reading from the N-terminus, the 226-residue chain is uncharacterized protein (226 aa).

A helical membrane pass occupies residues 121-141 (YLIGNIIGLPLTIPFILIPLI).

The protein to yeast YDL183c.

It localises to the membrane. This is an uncharacterized protein from Schizosaccharomyces pombe (strain 972 / ATCC 24843) (Fission yeast).